The following is a 449-amino-acid chain: Xylose isomerase (449 aa).

Catalysis depends on residues H103 and D106. Mg(2+) is bound by residues E234, E270, H273, D298, D309, D311, and D342.

The protein belongs to the xylose isomerase family. In terms of assembly, homotetramer. Mg(2+) is required as a cofactor.

The protein localises to the cytoplasm. It catalyses the reaction alpha-D-xylose = alpha-D-xylulofuranose. In terms of biological role, involved in D-xylose catabolism. The protein is Xylose isomerase (xylA) of Lactiplantibacillus pentosus (Lactobacillus pentosus).